Here is an 813-residue protein sequence, read N- to C-terminus: Leucine--tRNA ligase (813 aa).

The 'HIGH' region motif lies at S40–H51. Residues K572–S576 carry the 'KMSKS' region motif. K575 lines the ATP pocket.

The protein belongs to the class-I aminoacyl-tRNA synthetase family.

Its subcellular location is the cytoplasm. The enzyme catalyses tRNA(Leu) + L-leucine + ATP = L-leucyl-tRNA(Leu) + AMP + diphosphate. The sequence is that of Leucine--tRNA ligase from Clostridium botulinum (strain ATCC 19397 / Type A).